The primary structure comprises 133 residues: Large-conductance mechanosensitive channel (133 aa).

Helical transmembrane passes span 8–28 (FAMK…GAFG), 30–50 (IVTS…LGGI), and 73–93 (GQFI…FLFI).

Belongs to the MscL family. In terms of assembly, homopentamer.

It localises to the cell membrane. Functionally, channel that opens in response to stretch forces in the membrane lipid bilayer. May participate in the regulation of osmotic pressure changes within the cell. The chain is Large-conductance mechanosensitive channel from Hathewaya histolytica (Clostridium histolyticum).